The sequence spans 333 residues: Glutamyl-tRNA reductase (333 aa).

Substrate contacts are provided by residues 60–63, Ser-110, 115–117, and Gln-121; these read TCHR and ETE. The active-site Nucleophile is Cys-61. Residue 189–194 coordinates NADP(+); the sequence is GYSEIN.

Belongs to the glutamyl-tRNA reductase family. In terms of assembly, homodimer.

It catalyses the reaction (S)-4-amino-5-oxopentanoate + tRNA(Glu) + NADP(+) = L-glutamyl-tRNA(Glu) + NADPH + H(+). It participates in porphyrin-containing compound metabolism; protoporphyrin-IX biosynthesis; 5-aminolevulinate from L-glutamyl-tRNA(Glu): step 1/2. Catalyzes the NADPH-dependent reduction of glutamyl-tRNA(Glu) to glutamate 1-semialdehyde (GSA). The polypeptide is Glutamyl-tRNA reductase (Chlamydia muridarum (strain MoPn / Nigg)).